Reading from the N-terminus, the 126-residue chain is Large ribosomal subunit protein bL12 (126 aa).

It belongs to the bacterial ribosomal protein bL12 family. In terms of assembly, homodimer. Part of the ribosomal stalk of the 50S ribosomal subunit. Forms a multimeric L10(L12)X complex, where L10 forms an elongated spine to which 2 to 4 L12 dimers bind in a sequential fashion. Binds GTP-bound translation factors.

Its function is as follows. Forms part of the ribosomal stalk which helps the ribosome interact with GTP-bound translation factors. Is thus essential for accurate translation. The chain is Large ribosomal subunit protein bL12 from Acidovorax ebreus (strain TPSY) (Diaphorobacter sp. (strain TPSY)).